We begin with the raw amino-acid sequence, 800 residues long: MLQRRFISSSGIKRLLHRESNKVMHTVFFKVRYYSTELIKKKHKEDIEDWVKAQLKDSSTISGVYESRNKLDWMDSITKSPSSLDILKNQYNIVKDKDFGILWKQKFESADPDILMTIISLSTNQKVLFSIQQLLILINSLHFLKRDYDIGQIYTTYEQFTPLLASHTDKGTYGQFIEIMLVVQHNLHHFDVCETLFAEYIKYCKVKPQMISLGLNSFIRSNNTQLAVEFYTQAITNPDTFPITEKQLFEFLRCMERYLDMSSMKHIFYLWLKVKCGDEQSSSTNLPSFKTLAIIHRMLLRFSNTDELNDFLTNPVVLSTGYTSSVQFELIEFCHSLYCIKGDRTKSIDDSILMERVDKFITRLNNNISTRKELYMSVVQAYVSTNNFENLKVILEKIQRDNDISIDGSFHLCISRYFVNTNQFEGLFKYYRSVVKTTDGKTRLRPAFIQQLWSCAVNVYPMLAKEITNDLLVTLKRSQYSKCLTWVYTFLQENAHIHTRKINGGEDSSLSGFNAVDFERFEEFKKKVSHNDVYGAELVISNSLKEGIAPQFSFLYSVLALCLRNSLTGLARVVDVILRTRFRYIPLKVDILWLKWEIISNYRSFEKLSAEHLKELEFKLKEFERVHQKELSVQNYLQLTQICFHTRDFKYACYLISQARKNLDTSNNKQWMMYYMTSLKLASRMHESERFSRILKDWNCNHRASLITPGCIRQIKGFMKYFEKRPAYISTAASIDNKEIKDRIDELVLRYVDYKYQGLENMRKLTLFLKEWFDEEISLLKLEQNERKMKLFEENKKEEE.

It to yeast YHR160C.

It localises to the mitochondrion matrix. Its function is as follows. Required for translation of the mitochondrial gene for cytochrome c oxidase subunit II (COX2). In Saccharomyces cerevisiae (strain ATCC 204508 / S288c) (Baker's yeast), this protein is Protein PET111, mitochondrial (PET111).